Reading from the N-terminus, the 431-residue chain is Putative transcription factor R429 (431 aa).

Residues 28–95 (NKFENMSKAL…SIENCSESLD (68 aa)) adopt a coiled-coil conformation. Residues 142 to 187 (SQQENSSESNNDIVKNGTGGSTSKRKKIQPSNRCSGSKTGKVTETK) form a disordered region. Residues 143-152 (QQENSSESNN) are compositionally biased toward low complexity. Over residues 170–181 (QPSNRCSGSKTG) the composition is skewed to polar residues. A zinc finger lies at 218 to 241 (CSVPDCDGEKILNQNDGYMVCKKC).

Belongs to the nucleo-cytoplasmic large DNA viruses (NCLDVs) VLTF-3 family.

Its function is as follows. Putative transcription factor. In Acanthamoeba polyphaga (Amoeba), this protein is Putative transcription factor R429.